Here is a 702-residue protein sequence, read N- to C-terminus: Polyribonucleotide nucleotidyltransferase (702 aa).

2 residues coordinate Mg(2+): D485 and D491. The KH domain occupies 552–612 (PRTEIICIDP…EGVKKAISII (61 aa)). Residues 622 to 690 (GEIYLGKVTK…NQGRINLSRK (69 aa)) enclose the S1 motif domain.

Belongs to the polyribonucleotide nucleotidyltransferase family. Requires Mg(2+) as cofactor.

Its subcellular location is the cytoplasm. The enzyme catalyses RNA(n+1) + phosphate = RNA(n) + a ribonucleoside 5'-diphosphate. Involved in mRNA degradation. Catalyzes the phosphorolysis of single-stranded polyribonucleotides processively in the 3'- to 5'-direction. This chain is Polyribonucleotide nucleotidyltransferase, found in Clostridium botulinum (strain Langeland / NCTC 10281 / Type F).